Reading from the N-terminus, the 400-residue chain is MTALKVGSESWWQSKHGPEWQRLNDEMFEVTFWWRDPQGSEEYSTIKRVWVYITGVTDHHQNSQPRSMQRIAGTDVWQWTTQLNANWRGSYCFIPTERDDIFSAPSPDRLELREGWRKLLPQAIADPLNPQSWKGGRGHAVSALEMPQAPLQPGWDCPQAPETPAKEIIWKSERLKNSRRVWIFTTGDATAEERPLAVLLDGEFWAQSMPVWPALTSLTHRRQLPPAVYVLIDAIDTTHRAHELPCNADFWLAVQQELLPQVKAIAPFSDRADRTVVAGQSFGGLSALYAGLHWPERFGCVLSQSGSYWWPHRGGHQEGMLLEQLNTGEVSAEGLRIVLEAGVREPMIMQANQALYAQLHPLKESIFWRQVDGGHDALCWRGGLMQGLIDLWQPLFHDRS.

Belongs to the Fes family.

The protein resides in the cytoplasm. It carries out the reaction Fe(III)-enterobactin + 3 H2O + H(+) = Fe(III)-[N-(2,3-dihydroxybenzoyl)-L-serine] + 2 N-(2,3-dihydroxybenzoyl)-L-serine. The enzyme catalyses Fe(III)-enterobactin + H2O = Fe(III)-[N-(2,3-dihydroxybenzoyl)-L-serine]3 + H(+). The catalysed reaction is Fe(III)-[N-(2,3-dihydroxybenzoyl)-L-serine]3 + H2O + H(+) = Fe(III)-[N-(2,3-dihydroxybenzoyl)-L-serine]2 + N-(2,3-dihydroxybenzoyl)-L-serine. It catalyses the reaction Fe(III)-[N-(2,3-dihydroxybenzoyl)-L-serine]2 + H2O + H(+) = Fe(III)-[N-(2,3-dihydroxybenzoyl)-L-serine] + N-(2,3-dihydroxybenzoyl)-L-serine. It carries out the reaction enterobactin + 3 H2O = 3 N-(2,3-dihydroxybenzoyl)-L-serine + 2 H(+). In terms of biological role, catalyzes the hydrolysis of ferric enterobactin (Fe-Ent). Is responsible for the release of iron from ferric enterobactin. Also catalyzes the hydrolysis of iron-free enterobactin (Ent). Hydrolyzes ferric monoglucosyl-C-Ent (Fe-MGE) poorly and does not hydrolyze ferric diglucosyl-C-Ent (Fe-DGE) or ferric triglucosyl-C-Ent (Fe-TGE) at all. Also hydrolyzes apo MGE, but catalyzes the hydrolysis of apo DGE very poorly, and does not process apo TGE at all. The catalytic efficiency for processing Fe-Ent is much higher than that for apo Ent, suggesting that Fe-Ent is the physiological substrate. This Escherichia coli O6:H1 (strain CFT073 / ATCC 700928 / UPEC) protein is Iron(III) enterobactin esterase.